A 91-amino-acid chain; its full sequence is Putative regulatory protein Cphy_2880 (91 aa).

This sequence belongs to the RemA family.

In Lachnoclostridium phytofermentans (strain ATCC 700394 / DSM 18823 / ISDg) (Clostridium phytofermentans), this protein is Putative regulatory protein Cphy_2880.